The sequence spans 537 residues: Hexahomomethionine N-hydroxylase (537 aa).

A helical membrane pass occupies residues 7-27; it reads FNTCFQILLGFIVFIASITLL.

Belongs to the cytochrome P450 family. The cofactor is heme. As to expression, highly expressed in hypocotyl and roots. Lower expression in siliques, stems and leaves. Barely detectable in flowers. Expressed only in the vascular bundles in apical plant parts.

It localises to the endoplasmic reticulum membrane. It carries out the reaction L-hexahomomethionine + 2 reduced [NADPH--hemoprotein reductase] + 2 O2 = (E)-9-(methylsulfanyl)nonanal oxime + 2 oxidized [NADPH--hemoprotein reductase] + CO2 + 3 H2O + 2 H(+). The enzyme catalyses L-pentahomomethionine + 2 reduced [NADPH--hemoprotein reductase] + 2 O2 = (E)-8-(methylsulfanyl)octanal oxime + 2 oxidized [NADPH--hemoprotein reductase] + CO2 + 3 H2O + 2 H(+). It catalyses the reaction an L-polyhomomethionine + 2 reduced [NADPH--hemoprotein reductase] + 2 O2 = an (E)-omega-(methylsulfanyl)-alkanal oxime + 2 oxidized [NADPH--hemoprotein reductase] + CO2 + 3 H2O + 2 H(+). Catalyzes the conversion of the long chain elongated methionines penta- and hexahomomethionine to their corresponding aldoximes 8-methylthiooctanaldoxime and 9-methylthiononanaldoxime. In Arabidopsis thaliana (Mouse-ear cress), this protein is Hexahomomethionine N-hydroxylase (CYP79F2).